Reading from the N-terminus, the 128-residue chain is Fluoride-specific ion channel FluC (128 aa).

4 helical membrane-spanning segments follow: residues 5–25 (IVAIFVGAGLGALLRWFLSIG), 35–55 (LGTLASNLIGGYLIGIAVVAF), 67–87 (LFVITGFMGGLTTFSTYSVEV), and 96–116 (FGWALAVAALHLIGSFTLTGL). Na(+)-binding residues include G75 and T78.

It belongs to the fluoride channel Fluc/FEX (TC 1.A.43) family.

Its subcellular location is the cell inner membrane. The enzyme catalyses fluoride(in) = fluoride(out). With respect to regulation, na(+) is not transported, but it plays an essential structural role and its presence is essential for fluoride channel function. Its function is as follows. Fluoride-specific ion channel. Important for reducing fluoride concentration in the cell, thus reducing its toxicity. The polypeptide is Fluoride-specific ion channel FluC (Burkholderia pseudomallei (strain 1106a)).